Here is a 310-residue protein sequence, read N- to C-terminus: tRNA-cytidine(32) 2-sulfurtransferase (310 aa).

The PP-loop motif signature appears at 47-52 (SGGKDS). Residues cysteine 122, cysteine 125, and cysteine 213 each contribute to the [4Fe-4S] cluster site.

It belongs to the TtcA family. In terms of assembly, homodimer. Mg(2+) is required as a cofactor. It depends on [4Fe-4S] cluster as a cofactor.

The protein resides in the cytoplasm. The enzyme catalyses cytidine(32) in tRNA + S-sulfanyl-L-cysteinyl-[cysteine desulfurase] + AH2 + ATP = 2-thiocytidine(32) in tRNA + L-cysteinyl-[cysteine desulfurase] + A + AMP + diphosphate + H(+). It functions in the pathway tRNA modification. Catalyzes the ATP-dependent 2-thiolation of cytidine in position 32 of tRNA, to form 2-thiocytidine (s(2)C32). The sulfur atoms are provided by the cysteine/cysteine desulfurase (IscS) system. This chain is tRNA-cytidine(32) 2-sulfurtransferase, found in Haemophilus influenzae (strain PittEE).